A 1493-amino-acid polypeptide reads, in one-letter code: MSRAVHLPVPCPVQLGSLRNDSLEAQLHEYVKQGNYVKVKRILKKGIYVDAVNSLGQTALFIAALLGLTKLVDVLVDYGADPNHRCFDGSTPVHAAAFSGNQWILSKLLDAGGDLRLHDEKGRNPQTWALAAGKERSTVMVEFMQRCAAHMQAIIQGFSDLLKKIDSPQRLISGVPRFGGLMQGNPNGSPNRPPKAGVISAQNIYSFGFGKFYLTGGTQLAYLGSLPVIGEKEVIQADDEPTFSFFSGPYMVMTNLVWNGSRVTVKELHLSTHPHCSRLRMADLLIAEQEHSSKLRHPHVLQLMAVCLSPDLEKTRLVYERVTVGTLFSVLHERRAQFPVLHMEVIVHLLLQISDALRYLHSRGFIHRSLSSYAIHIVSTGEARLTNLEYMMESQDGGAHRGLTRVPLPTQLYNWAAPEVIIQKAATVKSDIYSFSVIVQEILTDNIPWDGLDGSVIKETIVLGNYLEADVRLPKPYYDIVKSGLQVKQKDRTMNLQDIRYIMKNDLKDFIGAQRTQPTESPRVQRYEFHPDVNVCLGLTSEHPKETPNLEIKELKETGSQFHSPRGHSSPTGKATPEPPVPDVSPVAQQTHRQDAASPACSVAEEARNPSPDQTSLCSFEINEIYSGCLDTADDPEEECPGTGSSLEGAIPNQTDELKSMEEELEKMEREVCCSCDEDESSSDADTELSCEDWEWQNDALCSPSRPEPARGAKGATNNRSMTEEYISKCVLNLKISQTLIHQNADLLRNVQQKIEKLEMIQKEQAERRSLWASSREFAGIHDSPSALGPPASSYLPPVVQRPGDQQLDPGGSGLTLARSPRTLPTLCGPGKQSRGEQFQPTHGAKASLERDRNQNTSSQGRPRESSPQSKTTQLSSALLTVPSHPQGSPTSSKPGQDSTRISMQSVSSEIYNAKSRNNKDDGEIHLKWKTEVKEMAAKAATGQLTVPPWHPRSGVALDSEAENEPDPLPQLPIRVSEHMDWQQAADYLKKSDEPGGNDKCGQTDSSDQRGRQSGPQRFTSIRHLPPREDEQPEHSEVFQANSDASVAVEKSYSGQSAQSTCSPESSEDTEDMTDEFLTPDHEYFYSSIAQENLALETSSPIDEDFEGIQHACARPQASGEEKFQMRKNLGKNSEILTKSQFQPIRSPEGEQDETLKEPPKEVKEKDISLTDIQDLSSISCEHDGSFKEVSCKTPKINHAPTSVSTPLSPGSLSSVASQYKDCLESIPFQDTKTGSTSCGTSQESTQTLSDKFTSVREKAKSLDSLLTSSEVLPARLTNLKRLPAFTGAGSSSIAKAPDTSRCATQRRSLPKELVEAISQHHIDELPPPSQELLDEIEHLKGQQVSSTALDENTASRPGSTENDQRHLEEQETHSNKEDSSMLWTKETQDLEEDTERAHSTLDEDLERWLQPPEDSTQLPDLPKGPAREASSKDQEVGEKKRKGEESTKPEKRKPESFLGTSEEEELKPCFWKRLGWSEPSRIIVLDQSDLSD.

3 ANK repeats span residues 27-54, 55-84, and 88-117; these read LHEYVKQGNYVKVKRILKKGIYVDAVNS, LGQTALFIAALLGLTKLVDVLVDYGADPNH, and DGSTPVHAAAFSGNQWILSKLLDAGGDLRL. A Protein kinase domain is found at 198-511; that stretch reads VISAQNIYSF…IMKNDLKDFI (314 aa). ATP contacts are provided by residues 204–212 and lysine 266; that span reads IYSFGFGKF. At serine 430 the chain carries Phosphoserine; by PLK1. The span at 559 to 573 shows a compositional bias: polar residues; it reads GSQFHSPRGHSSPTG. Positions 559-615 are disordered; that stretch reads GSQFHSPRGHSSPTGKATPEPPVPDVSPVAQQTHRQDAASPACSVAEEARNPSPDQT. Phosphoserine is present on residues serine 560 and serine 660. Disordered regions lie at residues 782–904 and 940–1081; these read HDSP…RISM and AATG…LTPD. Residues 789–795 carry the GPPX3Y motif; sequence GPPASSY. Residues 846–854 carry the D-box motif; it reads KASLERDRN. Polar residues-rich tracts occupy residues 855–904 and 1001–1020; these read QNTS…RISM and CGQTDSSDQRGRQSGPQRFT. Basic and acidic residues predominate over residues 1026 to 1037; sequence PPREDEQPEHSE. Polar residues predominate over residues 1053–1064; it reads YSGQSAQSTCSP. A compositionally biased stretch (acidic residues) spans 1066 to 1075; sequence SSEDTEDMTD. Serine 1100 is modified (phosphoserine). The interval 1115–1167 is disordered; that stretch reads RPQASGEEKFQMRKNLGKNSEILTKSQFQPIRSPEGEQDETLKEPPKEVKEKD. Residues 1131 to 1144 are compositionally biased toward polar residues; that stretch reads GKNSEILTKSQFQP. The segment covering 1154–1167 has biased composition (basic and acidic residues); sequence ETLKEPPKEVKEKD. Serine 1262 carries the post-translational modification Phosphoserine. Disordered regions lie at residues 1288-1307 and 1341-1466; these read GAGSSSIAKAPDTSRCATQR and KGQQ…EEEE. Residues 1343–1362 are compositionally biased toward polar residues; the sequence is QQVSSTALDENTASRPGSTE. Residues 1363 to 1380 show a composition bias toward basic and acidic residues; sequence NDQRHLEEQETHSNKEDS. At serine 1400 the chain carries Phosphoserine. Over residues 1426 to 1456 the composition is skewed to basic and acidic residues; that stretch reads PAREASSKDQEVGEKKRKGEESTKPEKRKPE. Serine 1492 is modified (phosphoserine).

Belongs to the protein kinase superfamily. In terms of assembly, interacts with KIF23 and RBM44. Interacts with CEP55; inhibiting interaction between CEP55 and PDCD6IP/ALIX and TSG101. Post-translationally, phosphorylated on Thr residues by CDK1 during early phases of mitosis, promoting the interaction with PLK1 and recruitment to kinetochores. Phosphorylated on Ser-430 by PLK1 during late prometaphase promotes the rapid depletion from kinetochores and its subsequent degradation by the APC/C complex.

Its subcellular location is the cytoplasm. The protein localises to the midbody. It localises to the chromosome. The protein resides in the centromere. It is found in the kinetochore. Its function is as follows. Required both for the formation of intercellular bridges during meiosis and for kinetochore-microtubule attachment during mitosis. Intercellular bridges are evolutionarily conserved structures that connect differentiating germ cells and are required for spermatogenesis and male fertility. Acts by promoting the conversion of midbodies into intercellular bridges via its interaction with CEP55: interaction with CEP55 inhibits the interaction between CEP55 and PDCD6IP/ALIX and TSG101, blocking cell abscission and leading to transform midbodies into intercellular bridges. Also plays a role during mitosis: recruited to kinetochores by PLK1 during early mitosis and regulates the maturation of the outer kinetochores and microtubule attachment. Has no protein kinase activity in vitro. The protein is Inactive serine/threonine-protein kinase TEX14 (TEX14) of Bos taurus (Bovine).